Here is a 318-residue protein sequence, read N- to C-terminus: ATP synthase gamma chain (318 aa).

It belongs to the ATPase gamma chain family. F-type ATPases have 2 components, CF(1) - the catalytic core - and CF(0) - the membrane proton channel. CF(1) has five subunits: alpha(3), beta(3), gamma(1), delta(1), epsilon(1). CF(0) has three main subunits: a, b and c.

It is found in the cell membrane. Produces ATP from ADP in the presence of a proton gradient across the membrane. The gamma chain is believed to be important in regulating ATPase activity and the flow of protons through the CF(0) complex. This is ATP synthase gamma chain from Lactobacillus gasseri (strain ATCC 33323 / DSM 20243 / BCRC 14619 / CIP 102991 / JCM 1131 / KCTC 3163 / NCIMB 11718 / NCTC 13722 / AM63).